We begin with the raw amino-acid sequence, 557 residues long: MAATIKWWQQAVVYQVYPRSFQDTNHDGIGDLKGITAHLDYLKQLGIDVIWLNPIYRSPNDDNGYDISDYQQIAADFGTMADFDELLQAAHDRGLKIIMDLVVNHTSDEHPRFKRSRQDRTNQYRDFYFWRSGNGKKAPNNWEAAFGGSAWQYDEQTQQYYLHTFSTKQPDLNWENPTLRESVYTMMTWWLNKGVDGFRMDVINQISKLPGLPDGPLKPHSQFGDARVTNGPRVHEFLQEMNQEVLSQFDIMTVGETHGVTPADALKYAGADQHELDMVFEFQHLRLDNSQHGLGKWSTRKTPLVALKKVISDWQVGLEGRAWNSLFWNNHDTPRAVSRFGDDRPAYRVRSAKMLATCLHLLQGTPYIYQGEELGMTDAHFTELASYRDIESLSAYRDLVTERQLLSPADMMARLAAASRDNSRTPMQWDTEVNAGFSDAAPWLTVNPNYRQINAAAALADPDSVWYYYQHLIQLRHQYPSVTLGSFELLWADDPQYSYMHGNGKADLASLLQFHSRDTVPTTGSISDPTAKCLISNYGEQQPNKLRPYEAWVYQLA.

Aspartate 201 acts as the Nucleophile in catalysis. Catalysis depends on glutamate 256, which acts as the Proton donor.

The protein belongs to the glycosyl hydrolase 13 family.

It catalyses the reaction Hydrolysis of terminal, non-reducing (1-&gt;4)-linked alpha-D-glucose residues with release of alpha-D-glucose.. In Pediococcus pentosaceus, this protein is Alpha-glucosidase (agl).